Consider the following 449-residue polypeptide: Tubulin alpha-1C chain (449 aa).

Positions 1 to 4 match the MREC motif motif; that stretch reads MREC. Gln11 lines the GTP pocket. An N6-acetyllysine modification is found at Lys40. Glu71, Ser140, Gly144, Thr145, Thr179, Asn206, and Asn228 together coordinate GTP. Glu71 contacts Mg(2+). Glu254 is an active-site residue. Residue Tyr282 is modified to 3'-nitrotyrosine. The tract at residues 429–449 is disordered; it reads EKDYEEVGADSADGEDEGEEY. A compositionally biased stretch (acidic residues) spans 431–449; the sequence is DYEEVGADSADGEDEGEEY. Tyr432 carries the phosphotyrosine modification. A Phosphoserine modification is found at Ser439. Tyr449 is modified (3'-nitrotyrosine).

It belongs to the tubulin family. As to quaternary structure, dimer of alpha and beta chains. A typical microtubule is a hollow water-filled tube with an outer diameter of 25 nm and an inner diameter of 15 nM. Alpha-beta heterodimers associate head-to-tail to form protofilaments running lengthwise along the microtubule wall with the beta-tubulin subunit facing the microtubule plus end conferring a structural polarity. Microtubules usually have 13 protofilaments but different protofilament numbers can be found in some organisms and specialized cells. The cofactor is Mg(2+). Post-translationally, some glutamate residues at the C-terminus are polyglutamylated, resulting in polyglutamate chains on the gamma-carboxyl group. Polyglutamylation plays a key role in microtubule severing by spastin (SPAST). SPAST preferentially recognizes and acts on microtubules decorated with short polyglutamate tails: severing activity by SPAST increases as the number of glutamates per tubulin rises from one to eight, but decreases beyond this glutamylation threshold. Glutamylation is also involved in cilia motility. Some glutamate residues at the C-terminus are monoglycylated but not polyglycylated due to the absence of functional TTLL10 in human. Monoglycylation is mainly limited to tubulin incorporated into cilia and flagella axonemes, which is required for their stability and maintenance. Flagella glycylation controls sperm motility. Both polyglutamylation and monoglycylation can coexist on the same protein on adjacent residues, and lowering glycylation levels increases polyglutamylation, and reciprocally. In terms of processing, acetylation of alpha chains at Lys-40 is located inside the microtubule lumen. This modification has been correlated with increased microtubule stability, intracellular transport and ciliary assembly. Post-translationally, methylation of alpha chains at Lys-40 is found in mitotic microtubules and is required for normal mitosis and cytokinesis contributing to genomic stability. Nitration of Tyr-449 is irreversible and interferes with normal dynein intracellular distribution. In terms of processing, undergoes a tyrosination/detyrosination cycle, the cyclic removal and re-addition of a C-terminal tyrosine residue by the enzymes tubulin tyrosine carboxypeptidase (MATCAP1/KIAA0895L, VASH1 or VASH2) and tubulin tyrosine ligase (TTL), respectively. Post-translationally, tyrosination promotes microtubule interaction with CAP-Gly domain-containing proteins such as CLIP1, CLIP2 and DCTN1. Tyrosination regulates the initiation of dynein-dynactin motility via interaction with DCTN1, which brings the dynein-dynactin complex into contact with microtubules. In neurons, tyrosinated tubulins mediate the initiation of retrograde vesicle transport. Detyrosination is involved in metaphase plate congression by guiding chromosomes during mitosis: detyrosination promotes interaction with CENPE, promoting pole-proximal transport of chromosomes toward the equator. Detyrosination increases microtubules-dependent mechanotransduction in dystrophic cardiac and skeletal muscle. In cardiomyocytes, detyrosinated microtubules are required to resist to contractile compression during contraction: detyrosination promotes association with desmin (DES) at force-generating sarcomeres, leading to buckled microtubules and mechanical resistance to contraction.

It is found in the cytoplasm. The protein resides in the cytoskeleton. It carries out the reaction GTP + H2O = GDP + phosphate + H(+). Functionally, tubulin is the major constituent of microtubules, a cylinder consisting of laterally associated linear protofilaments composed of alpha- and beta-tubulin heterodimers. Microtubules grow by the addition of GTP-tubulin dimers to the microtubule end, where a stabilizing cap forms. Below the cap, tubulin dimers are in GDP-bound state, owing to GTPase activity of alpha-tubulin. The protein is Tubulin alpha-1C chain (TUBA1C) of Homo sapiens (Human).